A 337-amino-acid polypeptide reads, in one-letter code: Anthranilate phosphoribosyltransferase (337 aa).

Residues Gly81, 84–85, Ser89, 91–94, 109–117, and Ala121 each bind 5-phospho-alpha-D-ribose 1-diphosphate; these read GD, NVST, and KHGNRAATS. Gly81 is a binding site for anthranilate. Residue Ser93 coordinates Mg(2+). Asn112 is an anthranilate binding site. Residue Arg167 participates in anthranilate binding. Mg(2+) contacts are provided by Asp226 and Glu227.

This sequence belongs to the anthranilate phosphoribosyltransferase family. In terms of assembly, homodimer. Requires Mg(2+) as cofactor.

The catalysed reaction is N-(5-phospho-beta-D-ribosyl)anthranilate + diphosphate = 5-phospho-alpha-D-ribose 1-diphosphate + anthranilate. It functions in the pathway amino-acid biosynthesis; L-tryptophan biosynthesis; L-tryptophan from chorismate: step 2/5. Catalyzes the transfer of the phosphoribosyl group of 5-phosphorylribose-1-pyrophosphate (PRPP) to anthranilate to yield N-(5'-phosphoribosyl)-anthranilate (PRA). This chain is Anthranilate phosphoribosyltransferase, found in Methylorubrum extorquens (strain PA1) (Methylobacterium extorquens).